Reading from the N-terminus, the 700-residue chain is Methionine synthase reductase (700 aa).

A Flavodoxin-like domain is found at 4 to 147; the sequence is FLLLYATQRG…VVEPWIDGLW (144 aa). FMN-binding positions include 10–14 and 93–124; these read TQRGQ and LLGLGDSEYTYFCNGGKVIDKRLQELGAQHFY. Residues 168–247 are hinge; it reads TLAQASDAPL…SSLSIPAVSP (80 aa). A phosphoserine mark is found at Ser173 and Ser190. The 263-residue stretch at 272–534 folds into the FAD-binding FR-type domain; the sequence is DPIFQVPISK…PRATNSFHLP (263 aa). Lys292 lines the NADP(+) pocket. FAD contacts are provided by residues 452 to 455 and 488 to 491; these read RPYS and GVCT. NADP(+)-binding positions include 611–612, 626–628, and Asp661; these read SR and YVQ. Trp699 lines the FAD pocket.

In terms of assembly, forms a multiprotein complex with MMACHC, MMADHC and MTR. The cofactor is FAD. FMN is required as a cofactor.

It localises to the cytoplasm. The enzyme catalyses 2 methylcob(III)alamin-[methionine synthase] + 2 S-adenosyl-L-homocysteine + NADP(+) + H(+) = 2 cob(II)alamin-[methionine synthase] + 2 S-adenosyl-L-methionine + NADPH. The catalysed reaction is 2 cob(II)alamin + A + 2 H2O + 2 H(+) = 2 aquacob(III)alamin + AH2. Its function is as follows. Key enzyme in methionine and folate homeostasis responsible for the reactivation of methionine synthase (MTR/MS) activity by catalyzing the reductive methylation of MTR-bound cob(II)alamin. Cobalamin (vitamin B12) forms a complex with MTR to serve as an intermediary in methyl transfer reactions that cycles between MTR-bound methylcob(III)alamin and MTR bound-cob(I)alamin forms, and occasional oxidative escape of the cob(I)alamin intermediate during the catalytic cycle leads to the inactive cob(II)alamin species. The processing of cobalamin in the cytosol occurs in a multiprotein complex composed of at least MMACHC, MMADHC, MTRR and MTR which may contribute to shuttle safely and efficiently cobalamin towards MTR in order to produce methionine. Also necessary for the utilization of methyl groups from the folate cycle, thereby affecting transgenerational epigenetic inheritance. Also acts as a molecular chaperone for methionine synthase by stabilizing apoMTR and incorporating methylcob(III)alamin into apoMTR to form the holoenzyme. Also serves as an aquacob(III)alamin reductase by reducing aquacob(III)alamin to cob(II)alamin; this reduction leads to stimulation of the conversion of apoMTR and aquacob(III)alamin to MTR holoenzyme. The sequence is that of Methionine synthase reductase (Mtrr) from Rattus norvegicus (Rat).